The following is a 584-amino-acid chain: Beta-(1--&gt;2)glucan export ATP-binding/permease protein NdvA (584 aa).

The ABC transmembrane type-1 domain occupies 21-301 (VSLVVAANII…MRQFSTQIFE (281 aa)). The next 6 helical transmembrane spans lie at 29–49 (IILA…IDAI), 57–77 (DILF…VLVA), 136–156 (THLA…SMDV), 158–178 (LTLV…MVMD), 248–268 (IAST…VQSG), and 272–292 (VGDV…LDQM). The region spanning 335–569 (VEFRHVSFDF…GGRFAALLHT (235 aa)) is the ABC transporter domain. 368-375 (GPTGAGKT) serves as a coordination point for ATP.

Belongs to the ABC transporter superfamily. Beta-(1--&gt;2)glucan exporter (TC 3.A.1.108.1) family. In terms of assembly, homodimer.

The protein localises to the cell inner membrane. The enzyme catalyses [(1-&gt;2)-beta-D-glucosyl](n)(in) + ATP + H2O = [(1-&gt;2)-beta-D-glucosyl](n)(out) + ADP + phosphate + H(+). Its function is as follows. Involved in beta-(1--&gt;2)glucan export. Transmembrane domains (TMD) form a pore in the inner membrane and the ATP-binding domain (NBD) is responsible for energy generation. The polypeptide is Beta-(1--&gt;2)glucan export ATP-binding/permease protein NdvA (Agrobacterium vitis (Rhizobium vitis)).